A 185-amino-acid chain; its full sequence is MAETAYIPRLREVYDRDIRSKLTEQFGLTNVMQVPRLDKVVINMGVGEAVNDRKKVELAAGDLALIAGQKPIVTHSRKAIATFKLREGQAIGAKVTLRKAKMYEFIDRLINVALPRVRDFRGLNPKSFDGRGNYSLGLKEHIVFPEIDYDKSGESWGMDITVCTTAATDEQARALLTAFNFPFRQ.

Belongs to the universal ribosomal protein uL5 family. In terms of assembly, part of the 50S ribosomal subunit; part of the 5S rRNA/L5/L18/L25 subcomplex. Contacts the 5S rRNA and the P site tRNA. Forms a bridge to the 30S subunit in the 70S ribosome.

This is one of the proteins that bind and probably mediate the attachment of the 5S RNA into the large ribosomal subunit, where it forms part of the central protuberance. In the 70S ribosome it contacts protein S13 of the 30S subunit (bridge B1b), connecting the 2 subunits; this bridge is implicated in subunit movement. Contacts the P site tRNA; the 5S rRNA and some of its associated proteins might help stabilize positioning of ribosome-bound tRNAs. The sequence is that of Large ribosomal subunit protein uL5 from Afipia carboxidovorans (strain ATCC 49405 / DSM 1227 / KCTC 32145 / OM5) (Oligotropha carboxidovorans).